The chain runs to 90 residues: Small ribosomal subunit protein bS20 (90 aa).

The protein belongs to the bacterial ribosomal protein bS20 family.

Functionally, binds directly to 16S ribosomal RNA. The chain is Small ribosomal subunit protein bS20 from Fusobacterium nucleatum subsp. nucleatum (strain ATCC 25586 / DSM 15643 / BCRC 10681 / CIP 101130 / JCM 8532 / KCTC 2640 / LMG 13131 / VPI 4355).